The primary structure comprises 306 residues: Putative secretory carrier-associated membrane protein 1 (306 aa).

The segment at 1-60 (MAGRYDSNPFEEDDVNPFSEQARGKAGGQPSYGGGAFYMPNPRNVPSMSSNSRLSPLPPE) is disordered. Over 1-141 (MAGRYDSNPF…EIPSHLQRMQ (141 aa)) the chain is Cytoplasmic. A compositionally biased stretch (gly residues) spans 25-36 (KAGGQPSYGGGA). Positions 44-54 (NVPSMSSNSRL) are enriched in polar residues. Residues 72–109 (LDSSKDLKNREKELQAREAELNKREKELKRREEAAARA) adopt a coiled-coil conformation. 4 helical membrane-spanning segments follow: residues 142 to 162 (YVAF…VIAV), 174 to 194 (IWLL…VLWY), 209 to 229 (FGLF…SAVA), and 257 to 277 (IFYF…IWVI). Residues 278–306 (QQVYMYFRGSGKAAEMKRDATRGAMRAAF) are Cytoplasmic-facing.

The protein belongs to the SCAMP family.

The protein localises to the cell membrane. The protein resides in the cytoplasmic vesicle. It localises to the secretory vesicle membrane. Probably involved in membrane trafficking. This is Putative secretory carrier-associated membrane protein 1 (SCAMP1) from Oryza sativa subsp. indica (Rice).